We begin with the raw amino-acid sequence, 236 residues long: Flagellar L-ring protein (236 aa).

A signal peptide spans 1 to 16 (MRMQLTAVLAASLLAG). C17 carries the N-palmitoyl cysteine lipid modification. A lipid anchor (S-diacylglycerol cysteine) is attached at C17.

Belongs to the FlgH family. The basal body constitutes a major portion of the flagellar organelle and consists of four rings (L,P,S, and M) mounted on a central rod.

Its subcellular location is the cell outer membrane. The protein resides in the bacterial flagellum basal body. Assembles around the rod to form the L-ring and probably protects the motor/basal body from shearing forces during rotation. The chain is Flagellar L-ring protein from Sinorhizobium fredii (strain NBRC 101917 / NGR234).